The chain runs to 264 residues: MAIYFIGLGLYDEKDITLKGLETARKCDLVFAEFYTSLLAGTTLDKIEELIGKPIRRLSREEVELQFERIVLSEAKGKDVAFLTAGDPMVATTHSDLRIRAKEMGIESYVIHAPSIYSAIAITGLQVYKFGKSATVAYPEKNWFPTSHYDVIRENKERGLHTMLFLDIKADQNRYMTANEAMEILLQVEEMKGEGVFTPDTLVVVLARAGSLNPTLKAGYVRDMLNEDFGRQPHVMVVPGRLHIVEAEYLVTFAGAPRKILDEV.

S-adenosyl-L-methionine-binding positions include Leu-10, Asp-87, Val-90, 115–116 (SI), Leu-166, Ala-209, and His-234.

This sequence belongs to the diphthine synthase family. As to quaternary structure, homodimer.

It catalyses the reaction 2-[(3S)-amino-3-carboxypropyl]-L-histidyl-[translation elongation factor 2] + 3 S-adenosyl-L-methionine = diphthine-[translation elongation factor 2] + 3 S-adenosyl-L-homocysteine + 3 H(+). Its pathway is protein modification; peptidyl-diphthamide biosynthesis. Functionally, S-adenosyl-L-methionine-dependent methyltransferase that catalyzes the trimethylation of the amino group of the modified target histidine residue in translation elongation factor 2 (EF-2), to form an intermediate called diphthine. The three successive methylation reactions represent the second step of diphthamide biosynthesis. This is Diphthine synthase from Thermococcus onnurineus (strain NA1).